The chain runs to 929 residues: Type I restriction enzyme SauCOLORF180P endonuclease subunit (929 aa).

Positions 254–418 (QQATETGNNG…DGRTTADIFG (165 aa)) constitute a Helicase ATP-binding domain. An ATP-binding site is contributed by 268 to 274 (TTGSGKT).

It belongs to the HsdR family. The type I restriction/modification system is composed of three polypeptides R, M and S.

It carries out the reaction Endonucleolytic cleavage of DNA to give random double-stranded fragments with terminal 5'-phosphates, ATP is simultaneously hydrolyzed.. Its function is as follows. The restriction (R) subunit of a type I restriction enzyme that recognizes an undetermined sequence and cleaves a random distance away. Subunit R is required for both nuclease and ATPase activities, but not for modification. After locating a non-methylated recognition site, the enzyme complex serves as a molecular motor that translocates DNA in an ATP-dependent manner until a collision occurs that triggers cleavage. This chain is Type I restriction enzyme SauCOLORF180P endonuclease subunit, found in Staphylococcus aureus (strain COL).